The primary structure comprises 242 residues: Biosynthetic peptidoglycan transglycosylase (242 aa).

The chain crosses the membrane as a helical span at residues 19-39; that stretch reads ILAALAVFWGGGIALFSVVPV.

It belongs to the glycosyltransferase 51 family.

Its subcellular location is the cell inner membrane. It catalyses the reaction [GlcNAc-(1-&gt;4)-Mur2Ac(oyl-L-Ala-gamma-D-Glu-L-Lys-D-Ala-D-Ala)](n)-di-trans,octa-cis-undecaprenyl diphosphate + beta-D-GlcNAc-(1-&gt;4)-Mur2Ac(oyl-L-Ala-gamma-D-Glu-L-Lys-D-Ala-D-Ala)-di-trans,octa-cis-undecaprenyl diphosphate = [GlcNAc-(1-&gt;4)-Mur2Ac(oyl-L-Ala-gamma-D-Glu-L-Lys-D-Ala-D-Ala)](n+1)-di-trans,octa-cis-undecaprenyl diphosphate + di-trans,octa-cis-undecaprenyl diphosphate + H(+). The protein operates within cell wall biogenesis; peptidoglycan biosynthesis. Peptidoglycan polymerase that catalyzes glycan chain elongation from lipid-linked precursors. The polypeptide is Biosynthetic peptidoglycan transglycosylase (Salmonella paratyphi B (strain ATCC BAA-1250 / SPB7)).